Consider the following 200-residue polypeptide: 3-isopropylmalate dehydratase small subunit (200 aa).

Belongs to the LeuD family. LeuD type 1 subfamily. In terms of assembly, heterodimer of LeuC and LeuD.

The enzyme catalyses (2R,3S)-3-isopropylmalate = (2S)-2-isopropylmalate. Its pathway is amino-acid biosynthesis; L-leucine biosynthesis; L-leucine from 3-methyl-2-oxobutanoate: step 2/4. In terms of biological role, catalyzes the isomerization between 2-isopropylmalate and 3-isopropylmalate, via the formation of 2-isopropylmaleate. The protein is 3-isopropylmalate dehydratase small subunit of Saccharopolyspora erythraea (strain ATCC 11635 / DSM 40517 / JCM 4748 / NBRC 13426 / NCIMB 8594 / NRRL 2338).